Reading from the N-terminus, the 330-residue chain is tRNA U34 carboxymethyltransferase (330 aa).

Carboxy-S-adenosyl-L-methionine contacts are provided by residues Lys-91, Trp-105, Lys-110, Gly-130, 152–154, 181–182, Met-196, Tyr-200, and Arg-315; these read DPS and IE.

The protein belongs to the class I-like SAM-binding methyltransferase superfamily. CmoB family. As to quaternary structure, homotetramer.

It carries out the reaction carboxy-S-adenosyl-L-methionine + 5-hydroxyuridine(34) in tRNA = 5-carboxymethoxyuridine(34) in tRNA + S-adenosyl-L-homocysteine + H(+). Catalyzes carboxymethyl transfer from carboxy-S-adenosyl-L-methionine (Cx-SAM) to 5-hydroxyuridine (ho5U) to form 5-carboxymethoxyuridine (cmo5U) at position 34 in tRNAs. In Shewanella amazonensis (strain ATCC BAA-1098 / SB2B), this protein is tRNA U34 carboxymethyltransferase.